Here is a 211-residue protein sequence, read N- to C-terminus: Ferritin heavy chain (211 aa).

A signal peptide spans 1–20 (MNSILLVFAGILAVCLPASA). The region spanning 35–191 (ITMHRSCRNS…GKASTLKKLM (157 aa)) is the Ferritin-like diiron domain. Cys-41 and Cys-150 are disulfide-bonded. Fe cation is bound by residues Glu-52, Glu-87, His-90, Glu-136, and Gln-173.

It belongs to the ferritin family. In terms of assembly, oligomer of 12 light (L) chains and 12 heavy (H) chains; L and H chains are disulfide-linked. The functional molecule forms a roughly spherical shell with a diameter of 12 nm and contains a central cavity into which the insoluble ferric iron core is deposited.

It is found in the golgi apparatus. It localises to the secreted. The catalysed reaction is 4 Fe(2+) + O2 + 4 H(+) = 4 Fe(3+) + 2 H2O. Stores iron in a soluble, non-toxic, readily available form. Important for iron homeostasis. Iron is taken up in the ferrous form and deposited as ferric hydroxides after oxidation. Ferritin is composed of a heavy (H) chain which is responsible for the oxidation and uptake of ferrous iron, and a light (L) chain which facilitates the nucleation of the ferrihydrite iron core. This chain is Ferritin heavy chain, found in Trichoplusia ni (Cabbage looper).